The primary structure comprises 254 residues: H-2 class II histocompatibility antigen, I-E alpha chain (254 aa).

An N-terminal signal peptide occupies residues 1 to 24 (RSRALILGVLALTTMLSLCGGEDD). An alpha-1 region spans residues 25–109 (IEADHVAFYG…KDSNFTPAAN (85 aa)). Topologically, residues 25-216 (IEADHVAFYG…IPAPMSELTE (192 aa)) are extracellular. N-linked (GlcNAc...) asparagine glycosylation is found at Asn-103 and Asn-143. The segment at 110 to 203 (EAPQATVFPK…GLEEPVLKHW (94 aa)) is alpha-2. The Ig-like C1-type domain maps to 112–204 (PQATVFPKSP…LEEPVLKHWE (93 aa)). A disulfide bridge connects residues Cys-132 and Cys-188. Residues 204–216 (EPEIPAPMSELTE) form a connecting peptide region. The chain crosses the membrane as a helical span at residues 217 to 242 (TVVCALGLSVGLVGIVVGTIFIIQGL). The Cytoplasmic segment spans residues 243–254 (RSGGTSRHPGPL).

Belongs to the MHC class II family.

The protein resides in the membrane. The sequence is that of H-2 class II histocompatibility antigen, I-E alpha chain from Mus musculus (Mouse).